The following is a 1321-amino-acid chain: Adhesion G protein-coupled receptor A3 (1321 aa).

A signal peptide spans 1 to 33; it reads MEPPGRRRGRAQPPLLLPLSLLALLALLGGGGG. Residues 34–761 lie on the Extracellular side of the membrane; that stretch reads GGAAALPAGC…YTQAASLLHP (728 aa). Asparagine 81 and asparagine 98 each carry an N-linked (GlcNAc...) asparagine glycan. LRR repeat units lie at residues 82–103, 106–127, 130–151, and 154–175; these read RTVTLILSNNKISELKNGSFSG, LLERLDLRNNLISSIDPGAFWG, SLKRLDLTNNRIGCLNADIFRG, and NLVRLNLSGNLFSSLSQGTFDY. N-linked (GlcNAc...) asparagine glycans are attached at residues asparagine 159, asparagine 206, asparagine 301, asparagine 332, asparagine 433, asparagine 453, and asparagine 592. The region spanning 187–237 is the LRRCT domain; it reads EYLLCDCNILWMHRWVKEKNITVRDTRCVYPKSLQAQPVTGVKQELLTCDP. Positions 242-340 constitute an Ig-like domain; the sequence is PSFYMTPSHR…GNNTRTVDIV (99 aa). Residues cysteine 264 and cysteine 324 are joined by a disulfide bond. The 168-residue stretch at 583-750 folds into the GAIN-B domain; sequence LDKQLSFKCN…AVLMDLTGSE (168 aa). The LRR 5 repeat unit spans residues 594 to 620; sequence SNTFSSLALKNTIVEASIQLPPSLFSP. N-linked (GlcNAc...) asparagine glycosylation is found at asparagine 652, asparagine 687, and asparagine 728. The segment at 701-750 is GPS; the sequence is AARWDFDLLNGQGGWKSDGCHILYSDENITTIQCYSLSNYAVLMDLTGSE. A disulfide bond links cysteine 720 and cysteine 734. A helical transmembrane segment spans residues 762–782; the sequence is VVYTTAIILLLCLLAVIVSYI. The Cytoplasmic segment spans residues 783 to 796; sequence YHHSLIRISLKSWH. The helical transmembrane segment at 797-817 threads the bilayer; the sequence is MLVNLCFHIFLTCVVFVGGIT. Residues 818–826 are Extracellular-facing; that stretch reads QTRNASICQ. Asparagine 821 carries N-linked (GlcNAc...) asparagine glycosylation. A helical membrane pass occupies residues 827-847; the sequence is AVGIILHYSTLATVLWVGVTA. Residues 848 to 876 are Cytoplasmic-facing; the sequence is RNIYKQVTKKAKRCQDPDEPPPPPRPMLR. Residues 877-897 traverse the membrane as a helical segment; it reads FYLIGGGIPIIVCGITAAANI. Residues 898 to 919 are Extracellular-facing; it reads KNYGSRPNAPYCWMAWEPSLGA. Residues 920-940 traverse the membrane as a helical segment; the sequence is FYGPASFITFVNCMYFLSIFI. Topologically, residues 941–996 are cytoplasmic; sequence QLKRHPERKYELKEPTEEQQRLAANENGEINHQDSMSLSLISTSALENEHTFHSQL. Residues 997-1017 traverse the membrane as a helical segment; sequence LGASLTLLLYVALWMFGALAV. Residues 1018 to 1024 are Extracellular-facing; it reads SLYYPLD. A helical membrane pass occupies residues 1025–1045; the sequence is LVFSFVFGATSLSFSAFFVVH. Over 1046–1321 the chain is Cytoplasmic; that stretch reads HCVNREDVRL…TGLWKHETTV (276 aa). Residues 1073–1083 are compositionally biased toward polar residues; the sequence is NVQPPNSNGTN. Disordered stretches follow at residues 1073–1094, 1198–1219, 1231–1265, and 1294–1321; these read NVQPPNSNGTNGEAPKCPNSSA, VEGSVQNGLPKSRLGNNEGHSR, QYNPPQQDSSDACSTLPKSSRNFEKPVSTTSKKDA, and SNGQEGPLLGTDSTGNVRTGLWKHETTV. Positions 1233–1250 are enriched in polar residues; sequence NPPQQDSSDACSTLPKSS. The short motif at 1319 to 1321 is the PDZ-binding element; that stretch reads TTV.

Belongs to the G-protein coupled receptor 2 family. Adhesion G-protein coupled receptor (ADGR) subfamily. As to quaternary structure, interacts (via PDZ-binding motif) with DLG1.

The protein localises to the membrane. Its function is as follows. Orphan receptor that may have a role in planar cell polarity pathway. This Homo sapiens (Human) protein is Adhesion G protein-coupled receptor A3.